Reading from the N-terminus, the 613-residue chain is Protein CER1-like 2 (613 aa).

A run of 6 helical transmembrane segments spans residues 13–33 (WTPL…DSIY), 44–64 (LLIV…ISLS), 95–115 (IIFN…TSTI), 122–142 (GVIL…YWFH), 182–202 (LILG…VVSI), and 322–342 (YLFL…SFSF). The Fatty acid hydroxylase domain occupies 134–268 (VEFIYYWFHR…MPMYDYIYGT (135 aa)).

This sequence belongs to the sterol desaturase family. As to expression, not detected in any tissues.

It localises to the membrane. This Arabidopsis thaliana (Mouse-ear cress) protein is Protein CER1-like 2.